The primary structure comprises 249 residues: Small ribosomal subunit protein uS3 (249 aa).

The KH type-2 domain occupies 39–109; that stretch reads IRTYVLARLK…EVKIDVVEVV (71 aa). The span at 226-239 shows a compositional bias: basic and acidic residues; the sequence is KERRNDAGARNRDS. The tract at residues 226-249 is disordered; that stretch reads KERRNDAGARNRDSRTKRRHRTKR. Residues 240–249 show a composition bias toward basic residues; the sequence is RTKRRHRTKR.

It belongs to the universal ribosomal protein uS3 family. In terms of assembly, part of the 30S ribosomal subunit. Forms a tight complex with proteins S10 and S14.

Binds the lower part of the 30S subunit head. Binds mRNA in the 70S ribosome, positioning it for translation. The sequence is that of Small ribosomal subunit protein uS3 from Pelodictyon phaeoclathratiforme (strain DSM 5477 / BU-1).